A 695-amino-acid polypeptide reads, in one-letter code: Elongation factor G 1 (695 aa).

The region spanning 6–284 is the tr-type G domain; the sequence is SKVRNIGISA…AVETYLPCPT (279 aa). Residues 15-22, 82-86, and 136-139 contribute to the GTP site; these read AHIDSGKT, DTPGH, and NKCD.

The protein belongs to the TRAFAC class translation factor GTPase superfamily. Classic translation factor GTPase family. EF-G/EF-2 subfamily.

It localises to the cytoplasm. Its function is as follows. Catalyzes the GTP-dependent ribosomal translocation step during translation elongation. During this step, the ribosome changes from the pre-translocational (PRE) to the post-translocational (POST) state as the newly formed A-site-bound peptidyl-tRNA and P-site-bound deacylated tRNA move to the P and E sites, respectively. Catalyzes the coordinated movement of the two tRNA molecules, the mRNA and conformational changes in the ribosome. This chain is Elongation factor G 1, found in Desulfotalea psychrophila (strain LSv54 / DSM 12343).